We begin with the raw amino-acid sequence, 656 residues long: Ankyrin repeat and SAM domain-containing protein 3 (656 aa).

Positions 1–422 (MSELSDEASE…AESSPQTQRA (422 aa)) are interaction with NEK7. Residues S2 and S5 each carry the phosphoserine modification. 6 ANK repeats span residues 34-64 (DVPL…DLNK), 68-97 (GGWT…SVNV), 101-130 (EGQT…ELEM), 134-163 (QGWT…NANV), 168-197 (CGFT…KVDA), and 201-220 (SGAT…IVAL). N96 bears the 3-hydroxyasparagine mark. Phosphoserine occurs at positions 201, 225, 243, 244, and 245. Disordered stretches follow at residues 235–265 (SPEK…GVSI) and 277–312 (GIGL…EEEG). T319 carries the post-translational modification Phosphothreonine. 4 positions are modified to phosphoserine: S320, S368, S371, and S375. The tract at residues 346–425 (GPVQSSSSSE…SPQTQRAPYS (80 aa)) is disordered. In terms of domain architecture, SAM spans 425–488 (SGPQDLAALL…TSAIARWHSS (64 aa)). The stretch at 501 to 526 (ADRLEAEMQELAIQLHKRCEEVEATR) forms a coiled coil. At S541 the chain carries Phosphoserine.

As to quaternary structure, homooligomer. Interacts (via SAM domain) with ANKS6 (via SAM domain). Interacts with BICC1. Interacts with NPHP1. Interacts with NEK8. Interacts with HIF1AN. Interacts with NEK7; this interaction alters the subcellular distribution of NEK7 by preventing its nuclear translocation. In terms of processing, hydroxylated at Asn-96, most probably by HIF1AN. Post-translationally, phosphorylations at Ser-5, Ser-225, Thr-319, Ser-320, Ser-368 and Ser-371 occur in a NEK7-dependent manner. Polyubiquitinated.

Its subcellular location is the cell projection. It is found in the cilium. The protein localises to the cytoplasm. Its function is as follows. May be involved in vasopressin signaling in the kidney. The sequence is that of Ankyrin repeat and SAM domain-containing protein 3 (ANKS3) from Homo sapiens (Human).